Consider the following 459-residue polypeptide: UDP-N-acetylmuramoylalanine--D-glutamate ligase (459 aa).

118–124 (GTNGKTT) lines the ATP pocket.

The protein belongs to the MurCDEF family.

The protein localises to the cytoplasm. It catalyses the reaction UDP-N-acetyl-alpha-D-muramoyl-L-alanine + D-glutamate + ATP = UDP-N-acetyl-alpha-D-muramoyl-L-alanyl-D-glutamate + ADP + phosphate + H(+). It functions in the pathway cell wall biogenesis; peptidoglycan biosynthesis. Functionally, cell wall formation. Catalyzes the addition of glutamate to the nucleotide precursor UDP-N-acetylmuramoyl-L-alanine (UMA). This Desulfosudis oleivorans (strain DSM 6200 / JCM 39069 / Hxd3) (Desulfococcus oleovorans) protein is UDP-N-acetylmuramoylalanine--D-glutamate ligase.